We begin with the raw amino-acid sequence, 220 residues long: MSAAQARHLTTLATGRYGFELQTLMERAGESLAGLAAHLAPDGPVLVVAGRGHNGGVGLAAAHCLARARRAVWVVPTHEAENYSGVPKELLERLAELPNVRLRSSLPKMKFSCALDAAVGMRLEGPPRGRTLDVITVLNNLGCKVLSLDVPTGLAADSGEVPGDVVRASATLALALPKPGTPPGGVVGDLYLASFDLPEALFHDVGLEPFVAPSPWARIV.

A YjeF N-terminal domain is found at 6–203 (ARHLTTLATG…SFDLPEALFH (198 aa)). 53–57 (HNGGV) is a (6S)-NADPHX binding site. K(+)-binding residues include asparagine 54 and aspartate 116. (6S)-NADPHX-binding positions include 120-126 (GMRLEGP) and aspartate 149. Residue threonine 152 participates in K(+) binding.

This sequence belongs to the NnrE/AIBP family. It depends on K(+) as a cofactor.

It catalyses the reaction (6R)-NADHX = (6S)-NADHX. It carries out the reaction (6R)-NADPHX = (6S)-NADPHX. In terms of biological role, catalyzes the epimerization of the S- and R-forms of NAD(P)HX, a damaged form of NAD(P)H that is a result of enzymatic or heat-dependent hydration. This is a prerequisite for the S-specific NAD(P)H-hydrate dehydratase to allow the repair of both epimers of NAD(P)HX. The sequence is that of NAD(P)H-hydrate epimerase from Truepera radiovictrix (strain DSM 17093 / CIP 108686 / LMG 22925 / RQ-24).